The chain runs to 464 residues: MSRTETDSLGTIEVPDDAYWGAQTQRSLENFAIGGQRMPLAVIHALALIKKAAARVNDHLGELPPEVARLIEQAADEVLAGRHDEHFPLVVWQTGSGTQTNMNVNEVIAGRANELAGNPRGGKSPVHPNDHVNRAQSSNDSFPTAMHIAAAKAVHEQLLPAIAELSGGLAEQSARHASLVKTGRTHLMDATPITFGQELSAFVAQLDYAERAIRAALPAVYQLAQGGTAVGTGLNAPKGFADAIAAEIAAESGLPFVAAPNKFAALAGHEPLVILSGALKSLAVALMKIANDLRLLGSGPRAGFAEVKLPANEPGSSIMPGKVNPTQCEALSMLACQVMGNDSTISFAASQGHLQLNVFKPVIVYNLLESIRLLADGCRNFNKHCVAGLEPDAQRMADLLERGLMLVTALNPHIGYDKAAEIAKKAYAEGTTLRAAALQLGYLDEAQFDEWVRPEQMLEAGHHG.

Substrate contacts are provided by residues 96–98 (SGT), 127–130 (HPND), 137–139 (SSN), and T185. H186 acts as the Proton donor/acceptor in catalysis. The active site involves S316. Substrate contacts are provided by residues S317 and 322-324 (KVN).

This sequence belongs to the class-II fumarase/aspartase family. Fumarase subfamily. Homotetramer.

It is found in the cytoplasm. The enzyme catalyses (S)-malate = fumarate + H2O. Its pathway is carbohydrate metabolism; tricarboxylic acid cycle; (S)-malate from fumarate: step 1/1. Functionally, involved in the TCA cycle. Catalyzes the stereospecific interconversion of fumarate to L-malate. In Pseudomonas aeruginosa (strain ATCC 15692 / DSM 22644 / CIP 104116 / JCM 14847 / LMG 12228 / 1C / PRS 101 / PAO1), this protein is Fumarate hydratase class II 1.